An 89-amino-acid polypeptide reads, in one-letter code: Conotoxin Lt6.4 (89 aa).

A signal peptide spans 1-22 (MKLTCVPIVAMLFLMACQLITA). Residues 23-50 (DYSREKHGYSAEKSSDKIQDSFYSKLTK) constitute a propeptide that is removed on maturation. 3 cysteine pairs are disulfide-bonded: Cys-52-Cys-67, Cys-59-Cys-71, and Cys-66-Cys-80.

It belongs to the conotoxin O1 superfamily. Expressed by the venom duct.

It localises to the secreted. In Conus litteratus (Lettered cone), this protein is Conotoxin Lt6.4.